Consider the following 154-residue polypeptide: Basic phospholipase A2 PC20 (154 aa).

The signal sequence occupies residues 1–21 (MYPAHLLVLLAVCVSLLGASA). A propeptide spanning residues 22–27 (ISPRPL) is cleaved from the precursor. Disulfide bonds link Cys-38–Cys-98, Cys-54–Cys-143, Cys-56–Cys-72, Cys-71–Cys-125, Cys-78–Cys-118, Cys-87–Cys-111, and Cys-105–Cys-116. Residues Tyr-55, Ser-57, and Gly-59 each coordinate Ca(2+). His-75 is a catalytic residue. Asp-76 lines the Ca(2+) pocket. Residue Asp-119 is part of the active site.

The protein belongs to the phospholipase A2 family. Group I subfamily. D49 sub-subfamily. Ca(2+) serves as cofactor. As to expression, expressed by the venom gland.

The protein resides in the secreted. It catalyses the reaction a 1,2-diacyl-sn-glycero-3-phosphocholine + H2O = a 1-acyl-sn-glycero-3-phosphocholine + a fatty acid + H(+). Its function is as follows. Snake venom phospholipase A2 (PLA2) that inhibits neuromuscular transmission by blocking acetylcholine release from the nerve termini. PLA2 catalyzes the calcium-dependent hydrolysis of the 2-acyl groups in 3-sn-phosphoglycerides. This Laticauda colubrina (Yellow-lipped sea krait) protein is Basic phospholipase A2 PC20.